The following is a 142-amino-acid chain: U1 small nuclear ribonucleoprotein C (142 aa).

The Matrin-type zinc finger occupies 4–36 (YYCDYCDTFLTHDSPSVRKTHNGGRKHKDNVRM).

The protein belongs to the U1 small nuclear ribonucleoprotein C family. As to quaternary structure, U1 snRNP is composed of the 7 core Sm proteins B/B', D1, D2, D3, E, F and G that assemble in a heptameric protein ring on the Sm site of the small nuclear RNA to form the core snRNP, and at least 3 U1 snRNP-specific proteins U1-70K, U1-A and U1-C. U1-C interacts with U1 snRNA and the 5' splice-site region of the pre-mRNA.

Its subcellular location is the nucleus. Component of the spliceosomal U1 snRNP, which is essential for recognition of the pre-mRNA 5' splice-site and the subsequent assembly of the spliceosome. U1-C is directly involved in initial 5' splice-site recognition for both constitutive and regulated alternative splicing. The interaction with the 5' splice-site seems to precede base-pairing between the pre-mRNA and the U1 snRNA. Stimulates commitment or early (E) complex formation by stabilizing the base pairing of the 5' end of the U1 snRNA and the 5' splice-site region. The protein is U1 small nuclear ribonucleoprotein C of Caenorhabditis briggsae.